Consider the following 308-residue polypeptide: Ribosomal RNA small subunit methyltransferase H (308 aa).

Residues 32 to 34 (AGH), Asp51, Phe78, Asp99, and Gln106 each bind S-adenosyl-L-methionine.

The protein belongs to the methyltransferase superfamily. RsmH family.

The protein localises to the cytoplasm. It carries out the reaction cytidine(1402) in 16S rRNA + S-adenosyl-L-methionine = N(4)-methylcytidine(1402) in 16S rRNA + S-adenosyl-L-homocysteine + H(+). In terms of biological role, specifically methylates the N4 position of cytidine in position 1402 (C1402) of 16S rRNA. The protein is Ribosomal RNA small subunit methyltransferase H of Mesoplasma florum (strain ATCC 33453 / NBRC 100688 / NCTC 11704 / L1) (Acholeplasma florum).